The sequence spans 249 residues: Probable phosphatase Shal_1519 (249 aa).

Residues His8, His10, His16, His41, Glu74, His102, His132, Asp193, and His195 each contribute to the Zn(2+) site.

The protein belongs to the PHP family. It depends on Zn(2+) as a cofactor.

The chain is Probable phosphatase Shal_1519 from Shewanella halifaxensis (strain HAW-EB4).